Here is a 582-residue protein sequence, read N- to C-terminus: External alternative NADH-ubiquinone oxidoreductase, mitochondrial (582 aa).

A mitochondrion-targeting transit peptide spans 1–30 (MLRLRPAVRAVSVARSVALTRSLHVSVAKF). The tract at residues 46–65 (KQTAGHQGHHQEIPKPDENH) is disordered. Over residues 54–65 (HHQEIPKPDENH) the composition is skewed to basic and acidic residues. 114–144 (TLVVLGSGWGSVSFLKKLDTSNYNVIVVSPR) contributes to the FAD binding site. Residue 277-313 (LHTVVVGGGPTGVEFAAELQDFFEDDLRKWIPDIRDD) participates in NAD(+) binding. Residues 454-501 (LLNGIAKTEDLNNEITNLEKQSEHTFDEQERKNIFAQLESKSRKLRRS) are a coiled coil.

Belongs to the NADH dehydrogenase family. Requires FAD as cofactor.

It localises to the mitochondrion inner membrane. It carries out the reaction a quinone + NADH + H(+) = a quinol + NAD(+). It catalyses the reaction a ubiquinone + NADH + H(+) = a ubiquinol + NAD(+). In terms of biological role, alternative NADH-ubiquinone oxidoreductase which catalyzes the oxidation of mitochondrial NADH does not translocate protons across the inner mitochondrial membrane. This Yarrowia lipolytica (strain CLIB 122 / E 150) (Yeast) protein is External alternative NADH-ubiquinone oxidoreductase, mitochondrial (NDH2).